A 201-amino-acid chain; its full sequence is Lymphotoxin-alpha (201 aa).

The signal sequence occupies residues 1–27 (MTSSGVLCLLGALSLQVLLLQPPGAQG). The segment at 23–52 (PGAQGAPNPDNSHSSSPAPPQTAQHLSQKS) is disordered. Residues 31–51 (PDNSHSSSPAPPQTAQHLSQK) are compositionally biased toward polar residues. One can recognise a THD domain in the interval 60-201 (PAAHLVGDPS…SSVFFGAFAL (142 aa)). The N-linked (GlcNAc...) asparagine glycan is linked to asparagine 93. Cysteines 117 and 152 form a disulfide.

Belongs to the tumor necrosis factor family. Homotrimer, and heterotrimer of either two LTB and one LTA subunits or (less prevalent) two LTA and one LTB subunits. Interacts with TNFRSF14.

The protein resides in the secreted. Its subcellular location is the membrane. In terms of biological role, cytokine that in its homotrimeric form binds to TNFRSF1A/TNFR1, TNFRSF1B/TNFBR and TNFRSF14/HVEM. In its heterotrimeric form with LTB binds to TNFRSF3/LTBR. Lymphotoxin is produced by lymphocytes and is cytotoxic for a wide range of tumor cells in vitro and in vivo. The sequence is that of Lymphotoxin-alpha (LTA) from Notamacropus eugenii (Tammar wallaby).